Here is a 549-residue protein sequence, read N- to C-terminus: Protein EPD1 (549 aa).

An N-terminal signal peptide occupies residues 1–22 (MLLNSLFPSILAAATFVTSAAA). N-linked (GlcNAc...) asparagine glycosylation is found at Asn40 and Asn59. Cys72 and Cys101 form a disulfide bridge. N-linked (GlcNAc...) asparagine glycosylation is found at Asn147 and Asn163. 5 disulfide bridges follow: Cys214–Cys347, Cys232–Cys263, Cys369–Cys420, Cys378–Cys444, and Cys397–Cys402. The segment covering 336–356 (AESASGVSRTSCPTNTDNWEA) has biased composition (polar residues). A disordered region spans residues 336–361 (AESASGVSRTSCPTNTDNWEASTELP). Asn383 is a glycosylation site (N-linked (GlcNAc...) asparagine). N-linked (GlcNAc...) asparagine glycosylation is found at Asn408 and Asn438. A disordered region spans residues 479–519 (SVRTDTSEATTDSGSGSSNSGSASSSKSTSSSTSSGSSGSK). The span at 487 to 519 (ATTDSGSGSSNSGSASSSKSTSSSTSSGSSGSK) shows a compositional bias: low complexity.

This sequence belongs to the glycosyl hydrolase 72 family.

It is found in the cell membrane. The sequence is that of Protein EPD1 (EPD1) from Candida maltosa (Yeast).